Consider the following 508-residue polypeptide: MTPRQRLTVLATGLGIFMVFVDVNIVNVALPSIQKVFHTGEQGLQWAVAGYSLGMAAVLMSCALLGDRYGRRRSFVFGVTLFVVSSIVCVLPVSLAVFTVARVIQGLGAAFISVLSLALLSHSFPNPRMKARAISNWMAIGMVGAASAPALGGLMVDGLGWRSVFLVNVPLGAIVWLLTLVGVDESQDPEPTQLDWVGQLTLIPAVALIAYTIIEAPRFDRQSAGFVAALLLAAGVLLWLFVRHEHRAAFPLVDLKLFAEPLYRSVLIVYFVVMSCFFGTLMVITQHFQNVRDLSPLHAGLMMLPVPAGFGVASLLAGRAVNKWGPQLPVLTCLAAMFIGLAIFAISMDHAHPVALVGLTIFGAGAGGCATPLLHLGMTKVDDGRAGMAAGMLNLQRSLGGIFGVAFLGTIVAAWLGAALPNTMADEIPDPIARAIVVDVIVDSANPHAHAAFIGPGHRITAAQEDEIVLAADAVFVSGIKLALGGAAVLLTGAFVLGWTRFPRTPAS.

The next 14 membrane-spanning stretches (helical) occupy residues 9–29 (VLATGLGIFMVFVDVNIVNVA), 46–66 (WAVAGYSLGMAAVLMSCALLG), 75–95 (FVFGVTLFVVSSIVCVLPVSL), 104–124 (IQGLGAAFISVLSLALLSHSF), 136–156 (NWMAIGMVGAASAPALGGLMV), 163–183 (SVFLVNVPLGAIVWLLTLVGV), 194–214 (LDWVGQLTLIPAVALIAYTII), 222–242 (QSAGFVAALLLAAGVLLWLFV), 265–285 (SVLIVYFVVMSCFFGTLMVIT), 297–317 (LHAGLMMLPVPAGFGVASLLA), 328–348 (LPVLTCLAAMFIGLAIFAISM), 354–374 (VALVGLTIFGAGAGGCATPLL), 399–419 (LGGIFGVAFLGTIVAAWLGAA), and 479–499 (GIKLALGGAAVLLTGAFVLGW).

It belongs to the major facilitator superfamily.

It localises to the cell inner membrane. Its function is as follows. Involved in resistance to ethambutol and isoniazid. The sequence is that of Drug efflux pump JefA from Mycobacterium tuberculosis (strain CDC 1551 / Oshkosh).